An 875-amino-acid polypeptide reads, in one-letter code: Protein translocase subunit SecA (875 aa).

ATP is bound by residues Gln-87, 105–109, and Asp-512; that span reads GEGKT. Residues Cys-860, Cys-862, Cys-871, and His-872 each contribute to the Zn(2+) site.

The protein belongs to the SecA family. In terms of assembly, monomer and homodimer. Part of the essential Sec protein translocation apparatus which comprises SecA, SecYEG and auxiliary proteins SecDF-YajC and YidC. Zn(2+) is required as a cofactor.

Its subcellular location is the cell inner membrane. The protein localises to the cytoplasm. It carries out the reaction ATP + H2O + cellular proteinSide 1 = ADP + phosphate + cellular proteinSide 2.. Part of the Sec protein translocase complex. Interacts with the SecYEG preprotein conducting channel. Has a central role in coupling the hydrolysis of ATP to the transfer of proteins into and across the cell membrane, serving both as a receptor for the preprotein-SecB complex and as an ATP-driven molecular motor driving the stepwise translocation of polypeptide chains across the membrane. This is Protein translocase subunit SecA from Buchnera aphidicola subsp. Acyrthosiphon pisum (strain 5A).